The following is a 604-amino-acid chain: Uptake hydrogenase large subunit (604 aa).

Residues Cys76, Cys79, Cys583, and Cys586 each coordinate Ni(2+).

This sequence belongs to the [NiFe]/[NiFeSe] hydrogenase large subunit family. Heterodimer of a large and a small subunit. Ni(2+) is required as a cofactor.

The protein localises to the cell membrane. It carries out the reaction H2 + A = AH2. Its function is as follows. This enzyme recycles the H(2) produced by nitrogenase to increase the production of ATP and to protect nitrogenase against inhibition or damage by O(2) under carbon- or phosphate-limited conditions. The protein is Uptake hydrogenase large subunit (hoxL) of Afipia carboxidovorans (strain ATCC 49405 / DSM 1227 / KCTC 32145 / OM5) (Oligotropha carboxidovorans).